We begin with the raw amino-acid sequence, 194 residues long: MSEWVEQRLQSLAKAFDQSYCGAIEAVVDLICQRFQAGNKLLICGNGGSAADAQHLAAEFVGRFHFNRQALPAIALTANSSILTSVSNDYTYDIVFSRQVEALGQPGDILWGLSTSGKSTNVLHALKCAKDKGLHTIGMAGNNGGLFQEFADYPLFVADKNTPCIQEVHLMTYHHICEQVESRLFAQKSVGIKV.

Positions 31 to 186 constitute an SIS domain; sequence ICQRFQAGNK…CEQVESRLFA (156 aa). Residue 46–48 coordinates substrate; the sequence is NGG. His-55 and Glu-59 together coordinate Zn(2+). Residues Glu-59, 88-89, 114-116, Ser-119, and Gln-166 contribute to the substrate site; these read ND and STS. Residues Gln-166 and His-174 each contribute to the Zn(2+) site.

The protein belongs to the SIS family. GmhA subfamily. The cofactor is Zn(2+).

The protein localises to the cytoplasm. The enzyme catalyses 2 D-sedoheptulose 7-phosphate = D-glycero-alpha-D-manno-heptose 7-phosphate + D-glycero-beta-D-manno-heptose 7-phosphate. The protein operates within carbohydrate biosynthesis; D-glycero-D-manno-heptose 7-phosphate biosynthesis; D-glycero-alpha-D-manno-heptose 7-phosphate and D-glycero-beta-D-manno-heptose 7-phosphate from sedoheptulose 7-phosphate: step 1/1. Functionally, catalyzes the isomerization of sedoheptulose 7-phosphate in D-glycero-D-manno-heptose 7-phosphate. In Synechocystis sp. (strain ATCC 27184 / PCC 6803 / Kazusa), this protein is Phosphoheptose isomerase.